A 159-amino-acid polypeptide reads, in one-letter code: Nascent polypeptide-associated complex subunit beta (159 aa).

Disordered regions lie at residues 1-39 (MDME…GMDD) and 124-159 (QSMQ…DKVE). The segment covering 23 to 32 (TPRRKVKNVH) has biased composition (basic residues). An NAC-A/B domain is found at 36–101 (GMDDKKLQTS…GEDKELTELV (66 aa)). Residues 136-153 (KDDEEDDDDIPDLVEGEN) are compositionally biased toward acidic residues.

This sequence belongs to the NAC-beta family. In terms of assembly, part of the nascent polypeptide-associated complex (NAC), consisting of EGD2 and EGD1. NAC associates with ribosomes via EGD1.

It is found in the cytoplasm. The protein localises to the nucleus. Functionally, component of the nascent polypeptide-associated complex (NAC), a dynamic component of the ribosomal exit tunnel, protecting the emerging polypeptides from interaction with other cytoplasmic proteins to ensure appropriate nascent protein targeting. The NAC complex also promotes mitochondrial protein import by enhancing productive ribosome interactions with the outer mitochondrial membrane and blocks the inappropriate interaction of ribosomes translating non-secretory nascent polypeptides with translocation sites in the membrane of the endoplasmic reticulum. EGD1 may act as a transcription factor that exert a negative effect on the expression of several genes that are transcribed by RNA polymerase II. This Sclerotinia sclerotiorum (strain ATCC 18683 / 1980 / Ss-1) (White mold) protein is Nascent polypeptide-associated complex subunit beta (egd1).